A 491-amino-acid chain; its full sequence is Polybrominated aromatic compounds synthase (491 aa).

Residue Cys437 participates in heme binding.

Belongs to the cytochrome P450 family. Heme is required as a cofactor.

Functionally, cytochrome P450 protein involved in the biosynthesis of polybrominated aromatic organic compounds. In the presence of ferredoxin, ferredoxin reductase and NADH, catalyzes the coupling of bromophenols and bromopyrroles, forming various polybrominated biphenyls and hydroxylated polybrominated diphenyl ethers (OH-BDE). Can also mediate the heterocoupling of 3,5-dibromocatechol. Can also use chlorinated phenolic substrates. 2,3,4-tribromopyrrole could be the physiological substrate. The chain is Polybrominated aromatic compounds synthase from Pseudoalteromonas luteoviolacea (strain 2ta16).